A 396-amino-acid chain; its full sequence is Ornithine aminotransferase (396 aa).

At K255 the chain carries N6-(pyridoxal phosphate)lysine.

This sequence belongs to the class-III pyridoxal-phosphate-dependent aminotransferase family. OAT subfamily. Pyridoxal 5'-phosphate serves as cofactor.

Its subcellular location is the cytoplasm. The catalysed reaction is a 2-oxocarboxylate + L-ornithine = L-glutamate 5-semialdehyde + an L-alpha-amino acid. It functions in the pathway amino-acid biosynthesis; L-proline biosynthesis; L-glutamate 5-semialdehyde from L-ornithine: step 1/1. Its function is as follows. Catalyzes the interconversion of ornithine to glutamate semialdehyde. The chain is Ornithine aminotransferase from Bacillus anthracis (strain A0248).